The primary structure comprises 89 residues: Small ribosomal subunit protein uS15 (89 aa).

Belongs to the universal ribosomal protein uS15 family. Part of the 30S ribosomal subunit. Forms a bridge to the 50S subunit in the 70S ribosome, contacting the 23S rRNA.

Its function is as follows. One of the primary rRNA binding proteins, it binds directly to 16S rRNA where it helps nucleate assembly of the platform of the 30S subunit by binding and bridging several RNA helices of the 16S rRNA. Forms an intersubunit bridge (bridge B4) with the 23S rRNA of the 50S subunit in the ribosome. This Erwinia tasmaniensis (strain DSM 17950 / CFBP 7177 / CIP 109463 / NCPPB 4357 / Et1/99) protein is Small ribosomal subunit protein uS15.